Consider the following 354-residue polypeptide: Protein RecA (354 aa).

Residue 65–72 (GPESSGKT) participates in ATP binding.

This sequence belongs to the RecA family.

Its subcellular location is the cytoplasm. In terms of biological role, can catalyze the hydrolysis of ATP in the presence of single-stranded DNA, the ATP-dependent uptake of single-stranded DNA by duplex DNA, and the ATP-dependent hybridization of homologous single-stranded DNAs. It interacts with LexA causing its activation and leading to its autocatalytic cleavage. In Pseudomonas savastanoi pv. phaseolicola (strain 1448A / Race 6) (Pseudomonas syringae pv. phaseolicola (strain 1448A / Race 6)), this protein is Protein RecA.